Reading from the N-terminus, the 173-residue chain is NADH-ubiquinone oxidoreductase chain 6 (173 aa).

5 helical membrane passes run 1 to 21 (MTYV…AVAS), 25 to 45 (PYFG…VLIW), 53 to 73 (LVLF…SAAL), 82 to 102 (LGSW…FGIL), and 142 to 162 (GVLL…LELV).

This sequence belongs to the complex I subunit 6 family.

It is found in the mitochondrion membrane. The catalysed reaction is a ubiquinone + NADH + 5 H(+)(in) = a ubiquinol + NAD(+) + 4 H(+)(out). Core subunit of the mitochondrial membrane respiratory chain NADH dehydrogenase (Complex I) that is believed to belong to the minimal assembly required for catalysis. Complex I functions in the transfer of electrons from NADH to the respiratory chain. The immediate electron acceptor for the enzyme is believed to be ubiquinone. The protein is NADH-ubiquinone oxidoreductase chain 6 (MT-ND6) of Tetraodon nigroviridis (Spotted green pufferfish).